A 39-amino-acid polypeptide reads, in one-letter code: MKLKSKLLLSCLALSTVFVATTIANAPTHQIEVAQRGMI.

Residues 1-34 (MKLKSKLLLSCLALSTVFVATTIANAPTHQIEVA) constitute a propeptide that is removed on maturation.

It belongs to the Phr family. In terms of assembly, interacts with RapF and inhibits its interaction with ComA. Contains a predicted signal peptide cleavage site in the N-terminal region, however the propeptide is probably subject to only one processing event, at the N-terminal end of the mature peptide.

It is found in the secreted. The protein localises to the cytoplasm. Signaling molecule involved in the regulation of genetic competence development. Secreted during production, but the mature peptide acts intracellularly, indicating that it needs to be imported into the cell to function. Stimulates expression of the genes controlled by ComA, a transcriptional factor that regulates the development of genetic competence. Acts by inhibiting RapF, which regulates the activity of ComA. The sequence is that of RapF inhibitor (phrF) from Bacillus subtilis (strain 168).